The primary structure comprises 152 residues: Deoxyuridine 5'-triphosphate nucleotidohydrolase (152 aa).

Substrate is bound by residues Arg-71–Gly-73, Asn-84, Leu-88–Asp-90, and Met-98.

Belongs to the dUTPase family. Mg(2+) serves as cofactor.

It carries out the reaction dUTP + H2O = dUMP + diphosphate + H(+). Its pathway is pyrimidine metabolism; dUMP biosynthesis; dUMP from dCTP (dUTP route): step 2/2. Functionally, this enzyme is involved in nucleotide metabolism: it produces dUMP, the immediate precursor of thymidine nucleotides and it decreases the intracellular concentration of dUTP so that uracil cannot be incorporated into DNA. The sequence is that of Deoxyuridine 5'-triphosphate nucleotidohydrolase from Citrobacter koseri (strain ATCC BAA-895 / CDC 4225-83 / SGSC4696).